The chain runs to 363 residues: Flagellar P-ring protein (363 aa).

An N-terminal signal peptide occupies residues 1 to 20 (MKLKLILAVAMLAFSLPSQA).

Belongs to the FlgI family. In terms of assembly, the basal body constitutes a major portion of the flagellar organelle and consists of four rings (L,P,S, and M) mounted on a central rod.

The protein localises to the periplasm. It is found in the bacterial flagellum basal body. Its function is as follows. Assembles around the rod to form the L-ring and probably protects the motor/basal body from shearing forces during rotation. The sequence is that of Flagellar P-ring protein from Shewanella sp. (strain MR-4).